Here is a 342-residue protein sequence, read N- to C-terminus: Erlin-1 (342 aa).

The Cytoplasmic segment spans residues 1–6; sequence MAHVGA. A helical transmembrane segment spans residues 7-23; it reads VVAAMAGLMAILLHSSI. Residues 24–342 are Lumenal-facing; that stretch reads HKIEEGHLAV…ASKPKASEGH (319 aa). The N-linked (GlcNAc...) asparagine glycan is linked to N106. Residues 308-342 are disordered; the sequence is SSASRPAAGESEQLESLSMRESLKKASKPKASEGH.

It belongs to the band 7/mec-2 family.

The protein resides in the endoplasmic reticulum membrane. Functionally, mediates the endoplasmic reticulum-associated degradation (ERAD) of inositol 1,4,5-trisphosphate receptors (IP3Rs). Involved in regulation of cellular cholesterol homeostasis by regulation the SREBP signaling pathway. Binds cholesterol and may promote ER retention of the SCAP-SREBF complex. This chain is Erlin-1, found in Danio rerio (Zebrafish).